Here is a 99-residue protein sequence, read N- to C-terminus: Nucleoid-associated protein LCABL_24440 (99 aa).

It belongs to the YbaB/EbfC family. Homodimer.

Its subcellular location is the cytoplasm. The protein localises to the nucleoid. Binds to DNA and alters its conformation. May be involved in regulation of gene expression, nucleoid organization and DNA protection. The protein is Nucleoid-associated protein LCABL_24440 of Lacticaseibacillus casei (strain BL23) (Lactobacillus casei).